A 396-amino-acid polypeptide reads, in one-letter code: L-lactate dehydrogenase (396 aa).

Residues 1–380 enclose the FMN hydroxy acid dehydrogenase domain; the sequence is MIISAASDYR…TQDSLVQVLG (380 aa). Tyr24 is a substrate binding site. Positions 106 and 127 each coordinate FMN. Tyr129 serves as a coordination point for substrate. Thr155 contacts FMN. Substrate is bound at residue Arg164. Residue Lys251 coordinates FMN. His275 acts as the Proton acceptor in catalysis. Position 278 (Arg278) interacts with substrate. An FMN-binding site is contributed by 306–330; the sequence is DSGIRNGLDVVRMIALGADTVLLGR.

Belongs to the FMN-dependent alpha-hydroxy acid dehydrogenase family. It depends on FMN as a cofactor.

The protein resides in the cell inner membrane. The catalysed reaction is (S)-lactate + A = pyruvate + AH2. Catalyzes the conversion of L-lactate to pyruvate. Is coupled to the respiratory chain. The chain is L-lactate dehydrogenase from Escherichia coli O1:K1 / APEC.